An 870-amino-acid chain; its full sequence is Probable disease resistance protein At1g59620 (870 aa).

Positions 123 to 432 (DKRNMRQTFS…AAEGMPRPRY (310 aa)) constitute an NB-ARC domain. 167 to 174 (GMGGIGKT) is an ATP binding site. LRR repeat units follow at residues 543-567 (LQLM…IGLL), 568-590 (IHLR…MQNL), 703-726 (MSGI…IYMP), 735-758 (PWHL…ILEK), 759-786 (LLQL…GFPQ), and 808-833 (MPRL…KFIT).

It belongs to the disease resistance NB-LRR family.

Probable disease resistance protein. This Arabidopsis thaliana (Mouse-ear cress) protein is Probable disease resistance protein At1g59620.